We begin with the raw amino-acid sequence, 412 residues long: Lipid droplet organization protein LDO45 (412 aa).

Residues 1 to 170 are Cytoplasmic-facing; sequence MAARNRRKNN…TVEKLNALQN (170 aa). The chain crosses the membrane as a helical span at residues 171–191; the sequence is SLYEVFWIIFIYLNYWFPNVG. The Lumenal portion of the chain corresponds to 192 to 247; that stretch reads DYVSNTFGQQDSIIIRISLSKSHFRALREKSSQKVQQAVKNIYFCFQEKPYLTAFK. Residues 248–268 form a helical membrane-spanning segment; it reads VSFAIGLVIPCSLLFLIMVST. Residues 269–271 lie on the Cytoplasmic side of the membrane; it reads ATF. The helical transmembrane segment at 272–292 threads the bilayer; that stretch reads FFFVYLTLFVVIGFFSSLFII. Position 293 (P293) is a topological domain, lumenal. Residues 294-314 form a helical membrane-spanning segment; it reads LLGISFVFAIGVVSFGFCSNM. Topologically, residues 315–412 are cytoplasmic; the sequence is SFKMAQLIYV…NKAGNKFQLS (98 aa). A disordered region spans residues 347-374; that stretch reads QEPQEPLSTLRPVSNPTIPSPLRQTARP. Positions 357 to 373 are enriched in polar residues; the sequence is RPVSNPTIPSPLRQTAR.

Interacts specifically with the seipin complex FLD1-LDB16. Only a fraction appears to associate with the seipin core components, suggesting that it may be an ancillary subunit of the complex.

Its subcellular location is the endoplasmic reticulum membrane. The protein localises to the lipid droplet. Its function is as follows. Involved in lipid droplet (LD) organization. Modulates triglyceride (TAG) storage by reducing DGA1 LD localization. Promotes LD targeting of some proteins, including PDR16. The polypeptide is Lipid droplet organization protein LDO45 (Saccharomyces cerevisiae (strain ATCC 204508 / S288c) (Baker's yeast)).